The primary structure comprises 584 residues: MTHIKEFFTKLSESSSNQNISNIPKKKKKLFLALFATLLVVAAVIGIVAGVNSRKNSGDNGNEPHHAILKSSCSSTRYPDLCFSAIAAVPEASKKVTSQKDVIEMSLNITTTAVEHNYFGIQKLLKRTNLTKREKVALHDCLETIDETLDELHKAVEDLEEYPNKKSLSQHADDLKTLMSAAMTNQGTCLDGFSHDDANKHVRDALSDGQVHVEKMCSNALAMIKNMTDTDMMIMRTSNNRKLTEETSTVDGWPAWLSPGDRRLLQSSSVTPNAVVAADGSGNFKTVAAAVAAAPQGGTKRYIIRIKAGVYRENVEVTKKHKNIMFIGDGRTRTIITGSRNVVDGSTTFKSATAAVVGEGFLARDITFQNTAGPSKHQAVALRVGADLSAFYNCDMLAYQDTLYVHSNRQFFVNCLIAGTVDFIFGNAAAVLQNCDIHARKPNSGQKNMVTAQGRTDPNQNTGIVIQKSRIGATSDLKPVQGSFPTYLGRPWKEYSRTVIMQSSITDLIHPAGWHEWDGNFALNTLFYGEHQNSGAGAGTSGRVKWKGFRVITSATEAQAFTPGSFIAGSSWLGSTGFPFSLGL.

The signal sequence occupies residues 1–42 (MTHIKEFFTKLSESSSNQNISNIPKKKKKLFLALFATLLVVA). N-linked (GlcNAc...) asparagine glycosylation is found at Asn-108, Asn-129, and Asn-226. The substrate site is built by Thr-348 and Gln-378. Residue Asp-401 is the Proton donor of the active site. Residues Cys-415 and Cys-435 are joined by a disulfide bond. Asp-422 (nucleophile) is an active-site residue. Substrate contacts are provided by Arg-490 and Trp-492.

The protein in the N-terminal section; belongs to the PMEI family. In the C-terminal section; belongs to the pectinesterase family. In terms of tissue distribution, expressed at high levels in flower buds, shoots and young leaves, and at lower levels in young fruit, young bark and juice vesicles. Not expressed at significant levels in leaf abscission zones following ethylene treatment or in mature leaves. In fruit abscission zones, expression was initially undetectable but increased markedly following ethylene treatment.

The protein localises to the secreted. The protein resides in the cell wall. It carries out the reaction [(1-&gt;4)-alpha-D-galacturonosyl methyl ester](n) + n H2O = [(1-&gt;4)-alpha-D-galacturonosyl](n) + n methanol + n H(+). It functions in the pathway glycan metabolism; pectin degradation; 2-dehydro-3-deoxy-D-gluconate from pectin: step 1/5. In terms of biological role, acts in the modification of cell walls via demethylesterification of cell wall pectin. The polypeptide is Pectinesterase 1 (PECS-1.1) (Citrus sinensis (Sweet orange)).